Here is a 504-residue protein sequence, read N- to C-terminus: UDP-N-acetylmuramoylalanine--D-glutamate ligase (504 aa).

Gly132 to Thr138 is an ATP binding site. Residues Ala284–Gly310 form a disordered region.

Belongs to the MurCDEF family.

The protein localises to the cytoplasm. The enzyme catalyses UDP-N-acetyl-alpha-D-muramoyl-L-alanine + D-glutamate + ATP = UDP-N-acetyl-alpha-D-muramoyl-L-alanyl-D-glutamate + ADP + phosphate + H(+). The protein operates within cell wall biogenesis; peptidoglycan biosynthesis. Functionally, cell wall formation. Catalyzes the addition of glutamate to the nucleotide precursor UDP-N-acetylmuramoyl-L-alanine (UMA). The sequence is that of UDP-N-acetylmuramoylalanine--D-glutamate ligase from Paraburkholderia phymatum (strain DSM 17167 / CIP 108236 / LMG 21445 / STM815) (Burkholderia phymatum).